The chain runs to 200 residues: Nucleoside triphosphate pyrophosphatase (200 aa).

The active-site Proton acceptor is aspartate 79.

The protein belongs to the Maf family. Requires a divalent metal cation as cofactor.

The protein localises to the cytoplasm. It carries out the reaction a ribonucleoside 5'-triphosphate + H2O = a ribonucleoside 5'-phosphate + diphosphate + H(+). The catalysed reaction is a 2'-deoxyribonucleoside 5'-triphosphate + H2O = a 2'-deoxyribonucleoside 5'-phosphate + diphosphate + H(+). Its function is as follows. Nucleoside triphosphate pyrophosphatase. May have a dual role in cell division arrest and in preventing the incorporation of modified nucleotides into cellular nucleic acids. This Legionella pneumophila (strain Paris) protein is Nucleoside triphosphate pyrophosphatase.